The following is a 1214-amino-acid chain: BOS complex subunit NOMO1 (1214 aa).

An N-terminal signal peptide occupies residues 1 to 23; it reads MRAGRCAAALLLLLLSGAGRAIG. Residues 24-1150 lie on the Extracellular side of the membrane; it reads SEDIVVGCGG…RKLPEQDIAQ (1127 aa). N-linked (GlcNAc...) asparagine glycosylation is found at asparagine 42, asparagine 210, and asparagine 610. The stretch at 692–720 forms a coiled coil; the sequence is KSAQELRREQQLAEIETRRQEREKNGKEE. Residues 708–726 are compositionally biased toward basic and acidic residues; it reads TRRQEREKNGKEEGEEGRA. The interval 708–733 is disordered; sequence TRRQEREKNGKEEGEEGRARPPGQEM. A helical transmembrane segment spans residues 1151–1167; sequence GSYIALPLTLLLLLAGY. The Cytoplasmic segment spans residues 1168–1214; sequence NHDKLIPLLLQLTSRLQGVRALGQAASDSSGPEDMKRQTKKQKTRRT. Residues 1190–1214 are disordered; sequence GQAASDSSGPEDMKRQTKKQKTRRT. 2 positions are modified to phosphoserine: serine 1196 and serine 1197. Residues 1205 to 1214 are compositionally biased toward basic residues; the sequence is QTKKQKTRRT.

Component of the back of Sec61 (BOS) complex, composed of NCLN/Nicalin, NOMO (NOMO1, NOMO2 or NOMO3) and TMEM147. The BOS complex is part of the multi-pass translocon (MPT) complex, composed of three subcomplexes, the GEL complex (composed of RAB5IF/OPTI and TMCO1), the BOS complex (composed of NCLN/Nicalin, NOMO and TMEM147) and the PAT complex (composed of WDR83OS/Asterix and CCDC47). The MPT complex associates with the SEC61 complex.

The protein resides in the endoplasmic reticulum membrane. Component of the multi-pass translocon (MPT) complex that mediates insertion of multi-pass membrane proteins into the lipid bilayer of membranes. The MPT complex takes over after the SEC61 complex: following membrane insertion of the first few transmembrane segments of proteins by the SEC61 complex, the MPT complex occludes the lateral gate of the SEC61 complex to promote insertion of subsequent transmembrane regions. In Mus musculus (Mouse), this protein is BOS complex subunit NOMO1.